The primary structure comprises 752 residues: Photosystem I P700 chlorophyll a apoprotein A1 (752 aa).

A run of 8 helical transmembrane segments spans residues 73–96 (IFSA…FHGA), 159–182 (LYWI…FHYH), 198–222 (MNHH…HIAL), 294–312 (IAHH…GHMY), 349–372 (WHAQ…HHMY), 388–414 (LSLF…IFMV), 436–458 (AIIS…LYIH), and 533–551 (FMVH…LILL). [4Fe-4S] cluster contacts are provided by C575 and C584. Helical transmembrane passes span 591–612 (HVFL…HFSW) and 666–688 (SSAY…MFLF). Position 677 (H677) interacts with chlorophyll a'. Residues M685 and Y693 each contribute to the chlorophyll a site. W694 serves as a coordination point for phylloquinone. Residues 726-746 (AVGLAHYLLGGIGTTWSFFLA) form a helical membrane-spanning segment.

Belongs to the PsaA/PsaB family. As to quaternary structure, the PsaA/B heterodimer binds the P700 chlorophyll special pair and subsequent electron acceptors. PSI consists of a core antenna complex that captures photons, and an electron transfer chain that converts photonic excitation into a charge separation. The eukaryotic PSI reaction center is composed of at least 11 subunits. P700 is a chlorophyll a/chlorophyll a' dimer, A0 is one or more chlorophyll a, A1 is one or both phylloquinones and FX is a shared 4Fe-4S iron-sulfur center. serves as cofactor.

Its subcellular location is the plastid. The protein localises to the chloroplast thylakoid membrane. The catalysed reaction is reduced [plastocyanin] + hnu + oxidized [2Fe-2S]-[ferredoxin] = oxidized [plastocyanin] + reduced [2Fe-2S]-[ferredoxin]. Its function is as follows. PsaA and PsaB bind P700, the primary electron donor of photosystem I (PSI), as well as the electron acceptors A0, A1 and FX. PSI is a plastocyanin/cytochrome c6-ferredoxin oxidoreductase, converting photonic excitation into a charge separation, which transfers an electron from the donor P700 chlorophyll pair to the spectroscopically characterized acceptors A0, A1, FX, FA and FB in turn. Oxidized P700 is reduced on the lumenal side of the thylakoid membrane by plastocyanin or cytochrome c6. The chain is Photosystem I P700 chlorophyll a apoprotein A1 from Trieres chinensis (Marine centric diatom).